Reading from the N-terminus, the 239-residue chain is Tetraspanin-9 (239 aa).

The Cytoplasmic portion of the chain corresponds to 1-13 (MARGCLCCLKYTM). A helical membrane pass occupies residues 14 to 34 (FLFNLIFWLCGCGLLGVGIWL). Residues 35–55 (SVSQGNFATFSPSFPSLSAAN) are Extracellular-facing. Residues 56-76 (LVIAIGTIVMVTGFLGCLGAI) form a helical membrane-spanning segment. The Cytoplasmic portion of the chain corresponds to 77 to 85 (KENKCLLLS). The chain crosses the membrane as a helical span at residues 86–106 (FFIVLLIILLAELILIILFFV). The Extracellular segment spans residues 107–203 (YMDKVNENAK…VKLWFDDNKH (97 aa)). Asn180 is a glycosylation site (N-linked (GlcNAc...) asparagine). A helical membrane pass occupies residues 204 to 224 (VLGTVGMCILIMQILGMAFSM). The Cytoplasmic segment spans residues 225–239 (TLFQHIHRTGKKYDA).

The protein belongs to the tetraspanin (TM4SF) family. As to quaternary structure, found in a complex with GP6. In terms of processing, glycosylated. As to expression, strongly expressed in megakaryocytes, platelets and lung. Weakly expressed in bone marrow, brain and kidney (at protein level).

The protein localises to the membrane. In Mus musculus (Mouse), this protein is Tetraspanin-9 (Tspan9).